Here is a 445-residue protein sequence, read N- to C-terminus: Maltoporin 2 (445 aa).

Positions 1–25 are cleaved as a signal peptide; the sequence is MKMKAKWLPIAAAVTAALASQAAFA.

Belongs to the porin LamB (TC 1.B.3) family. In terms of assembly, homotrimer formed of three 18-stranded antiparallel beta-barrels, containing three independent channels.

It localises to the cell outer membrane. It carries out the reaction beta-maltose(in) = beta-maltose(out). Its function is as follows. Involved in the transport of maltose and maltodextrins. The polypeptide is Maltoporin 2 (Aeromonas salmonicida (strain A449)).